Here is a 924-residue protein sequence, read N- to C-terminus: Bifunctional glutamine synthetase adenylyltransferase/adenylyl-removing enzyme (924 aa).

Residues 1–422 are adenylyl removase; the sequence is MQTKGCRFFM…QFKKLIQEEV (422 aa). The adenylyl transferase stretch occupies residues 424–924; the sequence is SPDETDTELE…PASTMALESE (501 aa).

It belongs to the GlnE family. It depends on Mg(2+) as a cofactor.

The enzyme catalyses [glutamine synthetase]-O(4)-(5'-adenylyl)-L-tyrosine + phosphate = [glutamine synthetase]-L-tyrosine + ADP. It catalyses the reaction [glutamine synthetase]-L-tyrosine + ATP = [glutamine synthetase]-O(4)-(5'-adenylyl)-L-tyrosine + diphosphate. Its function is as follows. Involved in the regulation of glutamine synthetase GlnA, a key enzyme in the process to assimilate ammonia. When cellular nitrogen levels are high, the C-terminal adenylyl transferase (AT) inactivates GlnA by covalent transfer of an adenylyl group from ATP to specific tyrosine residue of GlnA, thus reducing its activity. Conversely, when nitrogen levels are low, the N-terminal adenylyl removase (AR) activates GlnA by removing the adenylyl group by phosphorolysis, increasing its activity. The regulatory region of GlnE binds the signal transduction protein PII (GlnB) which indicates the nitrogen status of the cell. The protein is Bifunctional glutamine synthetase adenylyltransferase/adenylyl-removing enzyme of Acinetobacter baylyi (strain ATCC 33305 / BD413 / ADP1).